A 60-amino-acid chain; its full sequence is Toxin FS-2 (60 aa).

Cystine bridges form between C3–C22, C17–C39, C41–C52, and C53–C58. An important for binding to L-type calcium channels region spans residues 41 to 48 (CPTAMWPY).

Belongs to the three-finger toxin family. Short-chain subfamily. L-type calcium blocker sub-subfamily. In terms of tissue distribution, expressed by the venom gland.

Its subcellular location is the secreted. Its function is as follows. Specific blocker of the voltage-dependent L-type calcium channel (Cav1/CACNA1). Inhibits cardiac contractions. The polypeptide is Toxin FS-2 (Dendroaspis polylepis polylepis (Black mamba)).